A 97-amino-acid chain; its full sequence is Large ribosomal subunit protein bL36m (97 aa).

Belongs to the bacterial ribosomal protein bL36 family. Component of the mitochondrial ribosome large subunit (39S) which comprises a 16S rRNA and about 50 distinct proteins.

Its subcellular location is the mitochondrion. The sequence is that of Large ribosomal subunit protein bL36m (Mrpl36) from Rattus norvegicus (Rat).